Reading from the N-terminus, the 332-residue chain is Galectin-4 (332 aa).

2 consecutive Galectin domains span residues 19-150 and 203-332; these read YHNP…INFI and FNGR…YVQI. A beta-D-galactoside is bound at residue 265–271; the sequence is WGSEERK. Ser-267 is modified (phosphoserine).

As to quaternary structure, monomer.

In terms of biological role, galectin that binds lactose and a related range of sugars. May be involved in the assembly of adherens junctions. The chain is Galectin-4 (LGALS4) from Bos taurus (Bovine).